Reading from the N-terminus, the 937-residue chain is Translation initiation factor IF-2 (937 aa).

2 disordered regions span residues 61–156 (IQAN…KAKQ) and 171–274 (LTQS…SHKI). Basic and acidic residues predominate over residues 179–196 (AKKEISEVKKQEQEIKRH). Positions 197–208 (ENIKRRTGFRVI) are enriched in basic residues. The span at 237–252 (EDIKKEWQEKDKQEAK) shows a compositional bias: basic and acidic residues. The 170-residue stretch at 436–605 (ERPPVVTIMG…LIQADIMELK (170 aa)) folds into the tr-type G domain. A G1 region spans residues 445 to 452 (GHVDHGKT). A GTP-binding site is contributed by 445–452 (GHVDHGKT). The interval 470–474 (GITQH) is G2. A G3 region spans residues 491-494 (DTPG). Residues 491–495 (DTPGH) and 545–548 (NKMD) each bind GTP. Residues 545–548 (NKMD) are G4. A G5 region spans residues 581–583 (SAK).

Belongs to the TRAFAC class translation factor GTPase superfamily. Classic translation factor GTPase family. IF-2 subfamily.

Its subcellular location is the cytoplasm. Functionally, one of the essential components for the initiation of protein synthesis. Protects formylmethionyl-tRNA from spontaneous hydrolysis and promotes its binding to the 30S ribosomal subunits. Also involved in the hydrolysis of GTP during the formation of the 70S ribosomal complex. The chain is Translation initiation factor IF-2 from Helicobacter pylori (strain G27).